Consider the following 340-residue polypeptide: Heat-inducible transcription repressor HrcA (340 aa).

Belongs to the HrcA family.

Negative regulator of class I heat shock genes (grpE-dnaK-dnaJ and groELS operons). Prevents heat-shock induction of these operons. The sequence is that of Heat-inducible transcription repressor HrcA from Chromobacterium violaceum (strain ATCC 12472 / DSM 30191 / JCM 1249 / CCUG 213 / NBRC 12614 / NCIMB 9131 / NCTC 9757 / MK).